Reading from the N-terminus, the 134-residue chain is Transcriptional activator protein (134 aa).

The short motif at 17–31 is the Nuclear localization signal element; that stretch reads KVQHRIAKKTTRRRR. Residues 36–53 fold into a zinc finger; sequence CGCSYFVALGCHNHGFTH. Residues 73 to 103 form a disordered region; that stretch reads KSPVFQDNQTPRETISEEPRHNHNTSPIQLQ. Residues 75 to 85 show a composition bias toward polar residues; that stretch reads PVFQDNQTPRE. The tract at residues 119-134 is transactivation; it reads NLDSFTSSDLAFLKSI.

It belongs to the geminiviridae transcriptional activator protein family. As to quaternary structure, monomer. Homodimer. Homooligomer. Self-interaction correlates with nuclear localization and efficient activation of transcription. Monomers suppress local silencing by interacting with and inactivating host adenosine kinase 2 (ADK2) in the cytoplasm. Interacts with and inhibits host SNF1 kinase. Binds to ssDNA. May interact with host RPS27A. Phosphorylated.

It is found in the host nucleus. The protein localises to the host cytoplasm. Its function is as follows. Multifunctional protein that modulates host antiviral defenses and promotes host attractiveness to insect vectors. Acts as a suppressor of RNA-mediated gene silencing, also known as post-transcriptional gene silencing (PTGS), a mechanism of plant viral defense that limits the accumulation of viral RNAs. TrAP suppresses the host RNA silencing by inhibiting adenosine kinase 2 (ADK2), a kinase involved in a general methylation pathway. Also suppresses the host basal defense by interacting with and inhibiting SNF1 kinase, a key regulator of cell metabolism implicated in innate antiviral defense. Inhibits signal transduction by the phytohormone jasmonate, making the infected plant more attractive to aphids, which are the second host to play a role as a dissemination vector. Acts by binding to ubiquitin precursor RPS27A, thereby preventing ubiquitin degradation of JAZ. This is Transcriptional activator protein from Tomato yellow leaf curl China virus (TYLCCNV).